The primary structure comprises 314 residues: DNA-directed RNA polymerase subunit alpha (314 aa).

Positions 1–228 (MIEIEKPKIE…EHLNIFVGLT (228 aa)) are alpha N-terminal domain (alpha-NTD). Positions 245–314 (KEKVLEMTIE…ELGLGLRKDD (70 aa)) are alpha C-terminal domain (alpha-CTD).

Belongs to the RNA polymerase alpha chain family. In terms of assembly, homodimer. The RNAP catalytic core consists of 2 alpha, 1 beta, 1 beta' and 1 omega subunit. When a sigma factor is associated with the core the holoenzyme is formed, which can initiate transcription.

The catalysed reaction is RNA(n) + a ribonucleoside 5'-triphosphate = RNA(n+1) + diphosphate. Its function is as follows. DNA-dependent RNA polymerase catalyzes the transcription of DNA into RNA using the four ribonucleoside triphosphates as substrates. In Bacillus licheniformis (strain ATCC 14580 / DSM 13 / JCM 2505 / CCUG 7422 / NBRC 12200 / NCIMB 9375 / NCTC 10341 / NRRL NRS-1264 / Gibson 46), this protein is DNA-directed RNA polymerase subunit alpha.